The chain runs to 265 residues: Energy-coupling factor transporter ATP-binding protein EcfA1 (265 aa).

Residues 2-236 (IKIKNLVFRY…KEIVELAKID (235 aa)) form the ABC transporter domain. Residue 36–43 (GHNGSGKS) coordinates ATP.

The protein belongs to the ABC transporter superfamily. Energy-coupling factor EcfA family. Forms a stable energy-coupling factor (ECF) transporter complex composed of 2 membrane-embedded substrate-binding proteins (S component), 2 ATP-binding proteins (A component) and 2 transmembrane proteins (T component).

It localises to the cell membrane. ATP-binding (A) component of a common energy-coupling factor (ECF) ABC-transporter complex. Unlike classic ABC transporters this ECF transporter provides the energy necessary to transport a number of different substrates. This is Energy-coupling factor transporter ATP-binding protein EcfA1 from Mycoplasmopsis pulmonis (strain UAB CTIP) (Mycoplasma pulmonis).